Here is a 106-residue protein sequence, read N- to C-terminus: ATP-dependent Clp protease adapter protein ClpS (106 aa).

A compositionally biased stretch (basic and acidic residues) spans 1–13 (MPRNTSHEHDHGL). A disordered region spans residues 1–20 (MPRNTSHEHDHGLMVEASKP).

It belongs to the ClpS family. Binds to the N-terminal domain of the chaperone ClpA.

Its function is as follows. Involved in the modulation of the specificity of the ClpAP-mediated ATP-dependent protein degradation. The sequence is that of ATP-dependent Clp protease adapter protein ClpS from Xanthomonas axonopodis pv. citri (strain 306).